The sequence spans 1679 residues: GRIP and coiled-coil domain-containing protein 2 (1679 aa).

M1 is subject to N-acetylmethionine. 2 disordered regions span residues 1-23 and 1466-1522; these read MEDS…KLET and LKSE…SAGT. The stretch at 35–1469 forms a coiled coil; the sequence is KQMMLLQKAK…ETQLFQLKSE (1435 aa). S1474 and S1478 each carry phosphoserine. Over residues 1474–1483 the composition is skewed to polar residues; that stretch reads SPASSHQPSK. The segment at 1569-1608 is mediates interaction with RAB6A; that stretch reads HLNGLLRETEATNAILMEQIKLLKSEIRRLERNQEREKSV. Residues 1569-1679 form a mediates interaction with RAB9A region; that stretch reads HLNGLLRETE…SYLHSWSGLR (111 aa). Residues 1604 to 1654 enclose the GRIP domain; that stretch reads REKSVANLEYLKNVLLRFIFLKPGSERERLLPVIDTMLQLSPEEKGKLATV.

Homodimer. Interacts (via GRIP domain) with RAB6A (preferentially in its GTP-bound form). May interact (RAB6A-dependent) with ARL1; might be involved in GCC2 Golgi localization. Interacts with CLASP1 and CLASP2; recruits both proteins to membranes of the TGN. Interacts with STX16. Interacts (probably via GRIP domain) with RAB9A (preferentially in its GTP-bound form).

It localises to the cytoplasm. It is found in the golgi apparatus. Its subcellular location is the trans-Golgi network membrane. Golgin which probably tethers transport vesicles to the trans-Golgi network (TGN) and regulates vesicular transport between the endosomes and the Golgi. As a RAB9A effector it is involved in recycling of the mannose 6-phosphate receptor from the late endosomes to the TGN. May also play a role in transport between the recycling endosomes and the Golgi. Required for maintenance of the Golgi structure, it is involved in the biogenesis of noncentrosomal, Golgi-associated microtubules through recruitment of CLASP1 and CLASP2. This Rattus norvegicus (Rat) protein is GRIP and coiled-coil domain-containing protein 2 (Gcc2).